The following is a 179-amino-acid chain: Large ribosomal subunit protein uL5 (179 aa).

The protein belongs to the universal ribosomal protein uL5 family. Part of the 50S ribosomal subunit; part of the 5S rRNA/L5/L18/L25 subcomplex. Contacts the 5S rRNA and the P site tRNA. Forms a bridge to the 30S subunit in the 70S ribosome.

This is one of the proteins that bind and probably mediate the attachment of the 5S RNA into the large ribosomal subunit, where it forms part of the central protuberance. In the 70S ribosome it contacts protein S13 of the 30S subunit (bridge B1b), connecting the 2 subunits; this bridge is implicated in subunit movement. Contacts the P site tRNA; the 5S rRNA and some of its associated proteins might help stabilize positioning of ribosome-bound tRNAs. The protein is Large ribosomal subunit protein uL5 of Shewanella putrefaciens (strain CN-32 / ATCC BAA-453).